A 494-amino-acid chain; its full sequence is Cobyric acid synthase (494 aa).

The GATase cobBQ-type domain maps to 248–445 (ELEIAVLKLP…LHGIFDNGPW (198 aa)). The active-site Nucleophile is the Cys-329. His-437 is a catalytic residue.

The protein belongs to the CobB/CobQ family. CobQ subfamily.

It participates in cofactor biosynthesis; adenosylcobalamin biosynthesis. Functionally, catalyzes amidations at positions B, D, E, and G on adenosylcobyrinic A,C-diamide. NH(2) groups are provided by glutamine, and one molecule of ATP is hydrogenolyzed for each amidation. This is Cobyric acid synthase from Synechococcus sp. (strain WH7803).